A 355-amino-acid chain; its full sequence is Ubiquinone biosynthesis protein COQ4 homolog, mitochondrial (355 aa).

4 residues coordinate Zn(2+): His134, Asp135, His138, and Glu150.

The protein belongs to the COQ4 family. In terms of assembly, component of a multi-subunit COQ enzyme complex. Requires Zn(2+) as cofactor.

It localises to the mitochondrion inner membrane. It catalyses the reaction a 4-hydroxy-3-methoxy-5-(all-trans-polyprenyl)benzoate + H(+) = a 2-methoxy-6-(all-trans-polyprenyl)phenol + CO2. Its pathway is cofactor biosynthesis; ubiquinone biosynthesis. Lyase that catalyzes the C1-decarboxylation of 4-hydroxy-3-methoxy-5-(all-trans-polyprenyl)benzoic acid into 2-methoxy-6-(all-trans-polyprenyl)phenol during ubiquinone biosynthesis. The protein is Ubiquinone biosynthesis protein COQ4 homolog, mitochondrial of Plasmodium chabaudi chabaudi.